The primary structure comprises 284 residues: Pantothenate synthetase (284 aa).

32 to 39 (MGALHDGH) is a binding site for ATP. The active-site Proton donor is H39. Q63 serves as a coordination point for (R)-pantoate. Q63 contributes to the beta-alanine binding site. 149 to 152 (GEKD) lines the ATP pocket. Position 155 (Q155) interacts with (R)-pantoate. ATP is bound by residues I178 and 186-189 (MSSR).

The protein belongs to the pantothenate synthetase family. Homodimer.

The protein resides in the cytoplasm. It carries out the reaction (R)-pantoate + beta-alanine + ATP = (R)-pantothenate + AMP + diphosphate + H(+). Its pathway is cofactor biosynthesis; (R)-pantothenate biosynthesis; (R)-pantothenate from (R)-pantoate and beta-alanine: step 1/1. Functionally, catalyzes the condensation of pantoate with beta-alanine in an ATP-dependent reaction via a pantoyl-adenylate intermediate. The chain is Pantothenate synthetase from Roseobacter denitrificans (strain ATCC 33942 / OCh 114) (Erythrobacter sp. (strain OCh 114)).